We begin with the raw amino-acid sequence, 257 residues long: Pimeloyl-[acyl-carrier protein] methyl ester esterase (257 aa).

In terms of domain architecture, AB hydrolase-1 spans 16–242; that stretch reads LVLLHGWGLN…AAHAPFISHP (227 aa). Substrate-binding positions include W22, 82 to 83, and 143 to 147; these read SL and FLGLQ. Catalysis depends on S82, which acts as the Nucleophile. Active-site residues include D207 and H235. H235 is a binding site for substrate.

This sequence belongs to the AB hydrolase superfamily. Carboxylesterase BioH family. In terms of assembly, monomer.

The protein resides in the cytoplasm. The catalysed reaction is 6-carboxyhexanoyl-[ACP] methyl ester + H2O = 6-carboxyhexanoyl-[ACP] + methanol + H(+). The protein operates within cofactor biosynthesis; biotin biosynthesis. In terms of biological role, the physiological role of BioH is to remove the methyl group introduced by BioC when the pimeloyl moiety is complete. It allows to synthesize pimeloyl-ACP via the fatty acid synthetic pathway through the hydrolysis of the ester bonds of pimeloyl-ACP esters. The sequence is that of Pimeloyl-[acyl-carrier protein] methyl ester esterase from Sodalis glossinidius (strain morsitans).